Here is a 325-residue protein sequence, read N- to C-terminus: Thioredoxin reductase (325 aa).

FAD contacts are provided by residues 10-13 (SGPS), 39-40 (IA), Q44, N53, V86, C143, D286, and 293-295 (RQA). C140 and C143 are joined by a disulfide.

This sequence belongs to the class-II pyridine nucleotide-disulfide oxidoreductase family. In terms of assembly, homodimer. FAD serves as cofactor.

It localises to the cytoplasm. The enzyme catalyses [thioredoxin]-dithiol + NADP(+) = [thioredoxin]-disulfide + NADPH + H(+). The polypeptide is Thioredoxin reductase (TRR1) (Pneumocystis carinii).